A 161-amino-acid chain; its full sequence is 2-C-methyl-D-erythritol 2,4-cyclodiphosphate synthase (161 aa).

A divalent metal cation contacts are provided by D9 and H11. 4-CDP-2-C-methyl-D-erythritol 2-phosphate is bound by residues 9-11 (DFH) and 37-38 (HS). H45 lines the a divalent metal cation pocket. 4-CDP-2-C-methyl-D-erythritol 2-phosphate is bound by residues 59-61 (DIG), 64-68 (FPDTD), 135-138 (TTTE), and R145.

Belongs to the IspF family. Homotrimer. A divalent metal cation is required as a cofactor.

The catalysed reaction is 4-CDP-2-C-methyl-D-erythritol 2-phosphate = 2-C-methyl-D-erythritol 2,4-cyclic diphosphate + CMP. It participates in isoprenoid biosynthesis; isopentenyl diphosphate biosynthesis via DXP pathway; isopentenyl diphosphate from 1-deoxy-D-xylulose 5-phosphate: step 4/6. Involved in the biosynthesis of isopentenyl diphosphate (IPP) and dimethylallyl diphosphate (DMAPP), two major building blocks of isoprenoid compounds. Catalyzes the conversion of 4-diphosphocytidyl-2-C-methyl-D-erythritol 2-phosphate (CDP-ME2P) to 2-C-methyl-D-erythritol 2,4-cyclodiphosphate (ME-CPP) with a corresponding release of cytidine 5-monophosphate (CMP). The protein is 2-C-methyl-D-erythritol 2,4-cyclodiphosphate synthase of Leptospira interrogans serogroup Icterohaemorrhagiae serovar copenhageni (strain Fiocruz L1-130).